A 387-amino-acid chain; its full sequence is Dual-specificity RNA methyltransferase RlmN (387 aa).

Glu-110 (proton acceptor) is an active-site residue. Residues 117-349 form the Radical SAM core domain; it reads VGKAGALCVS…NRAGYASPIR (233 aa). Cys-124 and Cys-360 are disulfide-bonded. Residues Cys-131, Cys-135, and Cys-138 each contribute to the [4Fe-4S] cluster site. S-adenosyl-L-methionine is bound by residues 186–187, Ser-218, 240–242, and Asn-317; these read GE and SLH. Cys-360 (S-methylcysteine intermediate) is an active-site residue.

The protein belongs to the radical SAM superfamily. RlmN family. [4Fe-4S] cluster is required as a cofactor.

Its subcellular location is the cytoplasm. It carries out the reaction adenosine(2503) in 23S rRNA + 2 reduced [2Fe-2S]-[ferredoxin] + 2 S-adenosyl-L-methionine = 2-methyladenosine(2503) in 23S rRNA + 5'-deoxyadenosine + L-methionine + 2 oxidized [2Fe-2S]-[ferredoxin] + S-adenosyl-L-homocysteine. It catalyses the reaction adenosine(37) in tRNA + 2 reduced [2Fe-2S]-[ferredoxin] + 2 S-adenosyl-L-methionine = 2-methyladenosine(37) in tRNA + 5'-deoxyadenosine + L-methionine + 2 oxidized [2Fe-2S]-[ferredoxin] + S-adenosyl-L-homocysteine. Its function is as follows. Specifically methylates position 2 of adenine 2503 in 23S rRNA and position 2 of adenine 37 in tRNAs. m2A2503 modification seems to play a crucial role in the proofreading step occurring at the peptidyl transferase center and thus would serve to optimize ribosomal fidelity. The sequence is that of Dual-specificity RNA methyltransferase RlmN from Hyphomonas neptunium (strain ATCC 15444).